A 197-amino-acid chain; its full sequence is Putative rho GDP-dissociation inhibitor 1 (197 aa).

Belongs to the Rho GDI family. Interacts with rac1A, rac1B, rac1C, racB, raCC and RacE.

The protein resides in the cytoplasm. Its function is as follows. Regulates the GDP/GTP exchange reaction of the Rho proteins by inhibiting the dissociation of GDP from them, and the subsequent binding of GTP to them. Regulates the Rac-dependent signaling pathways controlling cytokinesis, actin reorganization and the contractile vacuole. Required for efficient accumulation of cap at the cell cortex. The sequence is that of Putative rho GDP-dissociation inhibitor 1 (rdiA) from Dictyostelium discoideum (Social amoeba).